Consider the following 603-residue polypeptide: Probable L-gulonolactone oxidase 6 (603 aa).

Positions 1–35 are cleaved as a signal peptide; it reads MAFTSSPSYGSLNAAFWRTIFVVHCISTLVFTTIS. Residues 64 to 246 enclose the FAD-binding PCMH-type domain; the sequence is STCRAANVAY…SQVTLKLQPM (183 aa).

The protein belongs to the oxygen-dependent FAD-linked oxidoreductase family. It depends on FAD as a cofactor.

The enzyme catalyses L-gulono-1,4-lactone + O2 = L-ascorbate + H2O2 + H(+). It functions in the pathway cofactor biosynthesis; L-ascorbate biosynthesis. Functionally, may be involved in the biosynthesis of ascorbic acid. This is Probable L-gulonolactone oxidase 6 from Arabidopsis thaliana (Mouse-ear cress).